A 292-amino-acid chain; its full sequence is Ribosomal protein L11 methyltransferase (292 aa).

Thr-144, Gly-165, Asp-187, and Asn-229 together coordinate S-adenosyl-L-methionine.

This sequence belongs to the methyltransferase superfamily. PrmA family.

Its subcellular location is the cytoplasm. The enzyme catalyses L-lysyl-[protein] + 3 S-adenosyl-L-methionine = N(6),N(6),N(6)-trimethyl-L-lysyl-[protein] + 3 S-adenosyl-L-homocysteine + 3 H(+). Its function is as follows. Methylates ribosomal protein L11. The polypeptide is Ribosomal protein L11 methyltransferase (Pseudomonas putida (strain GB-1)).